Here is a 176-residue protein sequence, read N- to C-terminus: ATP-dependent protease subunit HslV (176 aa).

The active site involves T2. 3 residues coordinate Na(+): A157, C160, and T163.

Belongs to the peptidase T1B family. HslV subfamily. A double ring-shaped homohexamer of HslV is capped on each side by a ring-shaped HslU homohexamer. The assembly of the HslU/HslV complex is dependent on binding of ATP.

It localises to the cytoplasm. It catalyses the reaction ATP-dependent cleavage of peptide bonds with broad specificity.. With respect to regulation, allosterically activated by HslU binding. Functionally, protease subunit of a proteasome-like degradation complex believed to be a general protein degrading machinery. This chain is ATP-dependent protease subunit HslV, found in Buchnera aphidicola subsp. Schizaphis graminum (strain Sg).